Reading from the N-terminus, the 501-residue chain is Zinc finger protein PLAG1 (501 aa).

Residues 1 to 30 (MATVIPGDLSEVRDTQKVPSGKRKRGETKP) are disordered. The Nuclear localization signal signature appears at 22–25 (KRKR). 7 C2H2-type zinc fingers span residues 34–56 (FPCQLCDKAFNSVEKLKVHSYSH), 62–86 (YKCTQQDCTKAFVSKYKLLRHMATH), 92–114 (HKCNYCEKMFHRKDHLKNHLHTH), 121–143 (FKCEECGKNYNTKLGFKRHLALH), 150–172 (LTCKVCLQTFESTGVLLEHLKTH), 185–207 (HQCEHCDRRFYTRKDVRRHMVVH), and 213–236 (FLCQYCAQRFGRKDHLTRHMKKSH). Composition is skewed to low complexity over residues 366-380 (SGMPSSSQDSQASSS) and 455-467 (TQLPPQTQDPQDP). 2 disordered regions span residues 366 to 406 (SGMP…GSVP) and 447 to 474 (QEEAHSSMTQLPPQTQDPQDPSNSIGLG).

Belongs to the krueppel C2H2-type zinc-finger protein family. In terms of tissue distribution, expressed in nephroblastoma.

It is found in the nucleus. Functionally, transcription factor and proto-oncogene whose activation results in up-regulation of target genes, such as IGFII, leading to uncontrolled cell proliferation. This is Zinc finger protein PLAG1 (PLAG1) from Gallus gallus (Chicken).